The sequence spans 232 residues: Noggin (232 aa).

Positions Met-1–Gly-27 are cleaved as a signal peptide. Residue Asn-62 is glycosylated (N-linked (GlcNAc...) asparagine). Residues Gly-77–Gly-96 form a disordered region. 4 cysteine pairs are disulfide-bonded: Cys-155–Cys-192, Cys-178–Cys-228, Cys-184–Cys-230, and Cys-207–Cys-215.

The protein belongs to the noggin family. In terms of assembly, homodimer. Interacts with GDF5; inhibits chondrocyte differentiation.

The protein localises to the secreted. Its function is as follows. Inhibitor of bone morphogenetic proteins (BMP) signaling which is required for growth and patterning of the neural tube and somite. Essential for cartilage morphogenesis and joint formation. Inhibits chondrocyte differentiation through its interaction with GDF5 and, probably, GDF6. The sequence is that of Noggin (NOG) from Homo sapiens (Human).